A 366-amino-acid chain; its full sequence is Beta sliding clamp (366 aa).

Belongs to the beta sliding clamp family. Forms a ring-shaped head-to-tail homodimer around DNA which binds and tethers DNA polymerases and other proteins to the DNA. The DNA replisome complex has a single clamp-loading complex (3 tau and 1 each of delta, delta', psi and chi subunits) which binds 3 Pol III cores (1 core on the leading strand and 2 on the lagging strand) each with a beta sliding clamp dimer. Additional proteins in the replisome are other copies of gamma, psi and chi, Ssb, DNA helicase and RNA primase.

It is found in the cytoplasm. Confers DNA tethering and processivity to DNA polymerases and other proteins. Acts as a clamp, forming a ring around DNA (a reaction catalyzed by the clamp-loading complex) which diffuses in an ATP-independent manner freely and bidirectionally along dsDNA. Initially characterized for its ability to contact the catalytic subunit of DNA polymerase III (Pol III), a complex, multichain enzyme responsible for most of the replicative synthesis in bacteria; Pol III exhibits 3'-5' exonuclease proofreading activity. The beta chain is required for initiation of replication as well as for processivity of DNA replication. This Chlamydia muridarum (strain MoPn / Nigg) protein is Beta sliding clamp (dnaN).